The following is a 557-amino-acid chain: Potassium-transporting ATPase potassium-binding subunit (557 aa).

12 helical membrane-spanning segments follow: residues 5 to 25 (GFLL…PLGS), 63 to 83 (LCAI…MLLG), 132 to 152 (GLTV…FAFI), 170 to 190 (LLRI…LFFI), 253 to 273 (FVQM…FGEV), 283 to 303 (LLWA…WAEV), 329 to 349 (VLVS…AVIA), 356 to 376 (ALGG…FGGV), 379 to 399 (GLYG…LMIG), 416 to 436 (LTAL…ALAM), 484 to 504 (LLAF…MAIA), and 526 to 546 (LFVG…FIPA).

It belongs to the KdpA family. In terms of assembly, the system is composed of three essential subunits: KdpA, KdpB and KdpC.

The protein localises to the cell inner membrane. Its function is as follows. Part of the high-affinity ATP-driven potassium transport (or Kdp) system, which catalyzes the hydrolysis of ATP coupled with the electrogenic transport of potassium into the cytoplasm. This subunit binds the periplasmic potassium ions and delivers the ions to the membrane domain of KdpB through an intramembrane tunnel. This is Potassium-transporting ATPase potassium-binding subunit from Shigella flexneri.